The primary structure comprises 555 residues: MELSVIALLLLGFVNFSWQNEQAPRVKTSLGDIRGYYKISRHGRKYEAYEGIPYAQPPVGNLRFKPPQPVQEWINELPAVEKGPVCTQYVVLSTPQNGDKVTGCEDCLYMNIYVPFRNGNESLLPVMFWIHGGAYQFGSGNKVNETLVMDRDVILVTFNYRLASFGFLSTGDSVVPGNMGLKDQNVALRWVHNHIRSFGGDPNQITIFGLSAGASSVHYHYLSRLSAGLFQRGISISGVALAPWAQTKYAPEKARRYAATLGCPTRNTKEMIDCLQTRPARILSQATGEVPDIYAPFGPVVDKYGPDPFITRSPIDIIVSGEAYDVPWISGVVSEEGLYISAAFVGNDQLLKQLNDDWDNIAPYLLDYNDTLPLNQHKEVAEKIRKYYLGSNPIDSNTSLSVTHMIGDRMFSVDFQKAAILKAKINKSPVWTYYYSYRSMHSCSEIVSGGSTKNFGVSHGDDAFLVLDTRISNVSRPNDLEMQQILLDFYTSFAIEGKPRAGDVQWQTLDPNEKEFQYLHIANPQNIKMETSNDSANINFWNTIDFNENKISGQE.

The N-terminal stretch at 1-19 is a signal peptide; that stretch reads MELSVIALLLLGFVNFSWQ. Cys-86 and Cys-107 form a disulfide bridge. N-linked (GlcNAc...) asparagine glycosylation is found at Asn-120 and Asn-144. Ser-211 (acyl-ester intermediate) is an active-site residue. Residues Cys-263 and Cys-274 are joined by a disulfide bond. The Charge relay system role is filled by Glu-336. Residues Asn-369 and Asn-397 are each glycosylated (N-linked (GlcNAc...) asparagine). His-459 acts as the Charge relay system in catalysis. 2 N-linked (GlcNAc...) asparagine glycosylation sites follow: Asn-473 and Asn-533.

It belongs to the type-B carboxylesterase/lipase family. Post-translationally, N-glycosylated. In terms of tissue distribution, expressed in several tissues, including epidermis (at protein level), fat body (at protein level), gut (at protein level), muscle (at protein level), and venom gland (at protein level).

The protein localises to the secreted. It catalyses the reaction a carboxylic ester + H2O = an alcohol + a carboxylate + H(+). In terms of biological role, lipolytic agent that may be involved in distributing the venom via degradation of blood triglycerides. The recombinant protein degrades triglycerides and exhibits high lipolytic activity toward long-chain triglycerides (tested on tributyrin, trioctanoin and triolein). Does not affect mammalian cells. The sequence is that of Carboxylic ester hydrolase (vCaE) from Bombus ignitus (Bumblebee).